The following is a 922-amino-acid chain: NEDD4-like E3 ubiquitin-protein ligase WWP1 (922 aa).

Residues 1–116 form the C2 domain; that stretch reads MATASPRSDT…IHNRKLERVK (116 aa). Composition is skewed to polar residues over residues 210-219, 243-278, 286-302, 314-323, and 340-351; these read GDNTPSSPSQ, NGES…STTV, ILTS…TSAE, DTSNSRSSSA, and RQQSGNANTETL. Residues 210-388 form a disordered region; the sequence is GDNTPSSPSQ…RPQPLPPGWE (179 aa). WW domains are found at residues 349-382, 381-414, 456-489, and 496-529; these read ETLP…RPQP, QPLP…RPTM, GPLP…DPRT, and EPLP…DPRN. The segment at 349 to 531 is required for interaction with and ubiquitination of AMOTL2. Required for interaction with YAP1; sequence ETLPSGWEQR…TTFKDPRNGK (183 aa). The HECT domain maps to 588-922; that stretch reads KPYDLRRRLY…IEETEGFGQE (335 aa). Cysteine 890 (glycyl thioester intermediate) is an active-site residue.

Interacts with the Crumbs complex components PALS1 and PATJ; interaction with the Crumbs complex is enhanced by WWP1's interaction with AMOTL2 and facilitates WWP1 localization to the plasma membrane. Interaction with the Crumbs complex promotes WWP1 monoubiquitination of AMOTL2, which activates the Hippo signaling pathway. Binds KLF2 and HIVEP3. Binds SCNN1A, SCNN1B, SCNN1G, WBP1, WBP2, DRPLA and adenovirus type 2 PIII. Interacts with RNF11. Interacts with SPART. Interacts with ERBB4 isoforms JM-B CYT-1 and JM-A CYT-1. Interacts with SMAD1, SMAD2, SMAD3, SMAD5, SMAD6, SMAD7, TGFBR1 and TGFBR2. Associates with the TGFBR1:TGFBR2 receptor complex in presence of SMAD7. Interacts with SKIL isoform 1. Interacts with TP63 isoform 1 and isoform 2. Interacts with STAMBP and RNF11. Interacts with NDFIP1 and NDFIP2; this interaction activates the E3 ubiquitin-protein ligase. Interacts with TGIF. Interacts (via WW domains) with ARRDC1, ARRDC2 and ARRDC3. In terms of assembly, (Microbial infection) Interacts with HTLV-1 protein Gag. As to quaternary structure, (Microbial infection) Interacts with ebola virus protein VP40. In terms of processing, auto-ubiquitinated and ubiquitinated by RNF11. As to expression, detected in heart, placenta, pancreas, kidney, liver, skeletal muscle, bone marrow, fetal brain, and at much lower levels in adult brain and lung. Isoform 1 and isoform 5 predominate in all tissues tested, except in testis and bone marrow, where isoform 5 is expressed at much higher levels than isoform 1.

Its subcellular location is the cytoplasm. The protein resides in the cell membrane. It localises to the nucleus. It is found in the cell junction. It carries out the reaction S-ubiquitinyl-[E2 ubiquitin-conjugating enzyme]-L-cysteine + [acceptor protein]-L-lysine = [E2 ubiquitin-conjugating enzyme]-L-cysteine + N(6)-ubiquitinyl-[acceptor protein]-L-lysine.. It functions in the pathway protein modification; protein ubiquitination. Its activity is regulated as follows. Activated by NDFIP1- and NDFIP2-binding. Functionally, E3 ubiquitin-protein ligase which accepts ubiquitin from an E2 ubiquitin-conjugating enzyme in the form of a thioester and then directly transfers the ubiquitin to targeted substrates. Ubiquitinates ERBB4 isoforms JM-A CYT-1 and JM-B CYT-1, KLF2, KLF5 and TP63 and promotes their proteasomal degradation. Ubiquitinates RNF11 without targeting it for degradation. Ubiquitinates and promotes degradation of TGFBR1; the ubiquitination is enhanced by SMAD7. Ubiquitinates SMAD6 and SMAD7. Ubiquitinates and promotes degradation of SMAD2 in response to TGF-beta signaling, which requires interaction with TGIF. Activates the Hippo signaling pathway in response to cell contact inhibition and recruitment to the Crumbs complex at the cell membrane. Monoubiquitinates AMOTL2 which facilitates its interaction with and activation of LATS2. LATS2 then phosphorylates YAP1, excluding it from the nucleus and therefore ultimately represses YAP1-driven transcription of target genes. The chain is NEDD4-like E3 ubiquitin-protein ligase WWP1 (WWP1) from Homo sapiens (Human).